Reading from the N-terminus, the 258-residue chain is MGVERIKAAFENGKKAFIPYVMGGDGGLEILKERIRFLDEAGASIVEIGIPFSDPVADGPTIQRAGKRALDSGVTVKGIFQALIEVRKEVQIPFVLMTYLNPVLAFGKERFIENCMEAGVDGIIVPDLPYEEQDIIAPLLREANIALIPLVTVTSPIERIKKIMSESEGFVYAVTVAGVTGVRQNFKDEIHSYLEKVKSHTHLPVVAGFGISTKEHVEEMVTICDGVVVGSKVIELLENEKREEICEFIQATKQKEEA.

Catalysis depends on proton acceptor residues E47 and D58.

Belongs to the TrpA family. Tetramer of two alpha and two beta chains.

The enzyme catalyses (1S,2R)-1-C-(indol-3-yl)glycerol 3-phosphate + L-serine = D-glyceraldehyde 3-phosphate + L-tryptophan + H2O. It functions in the pathway amino-acid biosynthesis; L-tryptophan biosynthesis; L-tryptophan from chorismate: step 5/5. Functionally, the alpha subunit is responsible for the aldol cleavage of indoleglycerol phosphate to indole and glyceraldehyde 3-phosphate. The polypeptide is Tryptophan synthase alpha chain (Bacillus thuringiensis (strain Al Hakam)).